Reading from the N-terminus, the 369-residue chain is Transaldolase (369 aa).

The active-site Schiff-base intermediate with substrate is Lys-140.

It belongs to the transaldolase family. Type 2 subfamily.

It localises to the cytoplasm. The enzyme catalyses D-sedoheptulose 7-phosphate + D-glyceraldehyde 3-phosphate = D-erythrose 4-phosphate + beta-D-fructose 6-phosphate. It participates in carbohydrate degradation; pentose phosphate pathway; D-glyceraldehyde 3-phosphate and beta-D-fructose 6-phosphate from D-ribose 5-phosphate and D-xylulose 5-phosphate (non-oxidative stage): step 2/3. In terms of biological role, transaldolase is important for the balance of metabolites in the pentose-phosphate pathway. The protein is Transaldolase of Parafrankia sp. (strain EAN1pec).